Here is a 477-residue protein sequence, read N- to C-terminus: Ribulose bisphosphate carboxylase large chain (477 aa).

Residues 1 to 2 (MS) constitute a propeptide that is removed on maturation. Pro-3 bears the N-acetylproline mark. N6,N6,N6-trimethyllysine is present on Lys-14. Positions 123 and 173 each coordinate substrate. Lys-175 serves as the catalytic Proton acceptor. Substrate is bound at residue Lys-177. Mg(2+) contacts are provided by Lys-201, Asp-203, and Glu-204. N6-carboxylysine is present on Lys-201. Catalysis depends on His-294, which acts as the Proton acceptor. Arg-295, His-327, and Ser-379 together coordinate substrate.

This sequence belongs to the RuBisCO large chain family. Type I subfamily. As to quaternary structure, heterohexadecamer of 8 large chains and 8 small chains; disulfide-linked. The disulfide link is formed within the large subunit homodimers. Mg(2+) is required as a cofactor. In terms of processing, the disulfide bond which can form in the large chain dimeric partners within the hexadecamer appears to be associated with oxidative stress and protein turnover.

The protein localises to the plastid. The protein resides in the chloroplast. The enzyme catalyses 2 (2R)-3-phosphoglycerate + 2 H(+) = D-ribulose 1,5-bisphosphate + CO2 + H2O. The catalysed reaction is D-ribulose 1,5-bisphosphate + O2 = 2-phosphoglycolate + (2R)-3-phosphoglycerate + 2 H(+). RuBisCO catalyzes two reactions: the carboxylation of D-ribulose 1,5-bisphosphate, the primary event in carbon dioxide fixation, as well as the oxidative fragmentation of the pentose substrate in the photorespiration process. Both reactions occur simultaneously and in competition at the same active site. This is Ribulose bisphosphate carboxylase large chain from Manihot esculenta (Cassava).